The primary structure comprises 3391 residues: Genome polyprotein (3391 aa).

Residues 1-15 (MNNQRKKAKNTPFNM) are interaction with host EXOC1. Topologically, residues 1 to 101 (MNNQRKKAKN…LNILNRRRRS (101 aa)) are cytoplasmic. The tract at residues 37–72 (MLQGRGPLKLFMALVAFLRFLTIPPTAGILKRWGTI) is hydrophobic; homodimerization of capsid protein C. Positions 101–114 (SAGMIIMLIPTVMA) are cleaved as a propeptide — ER anchor for the capsid protein C, removed in mature form by serine protease NS3. Residues 102–122 (AGMIIMLIPTVMAFHLTTRNG) traverse the membrane as a helical segment. Residues 123-238 (EPHMIVSRQE…GAWKHAQRIE (116 aa)) are Extracellular-facing. A glycan (N-linked (GlcNAc...) asparagine; by host) is linked at Asn183. A helical transmembrane segment spans residues 239 to 259 (TWILRHPGFTIMAAILAYTIG). The Cytoplasmic segment spans residues 260-265 (TTHFQR). A helical membrane pass occupies residues 266–280 (ALIFILLTAVAPSMT). Residues 281–725 (MRCIGISNRD…LHQVFGAIYG (445 aa)) lie on the Extracellular side of the membrane. 4 cysteine pairs are disulfide-bonded: Cys283/Cys310, Cys340/Cys401, Cys354/Cys385, and Cys372/Cys396. A glycan (N-linked (GlcNAc...) asparagine; by host) is linked at Asn347. The interval 378-391 (DRGWGNGCGLFGKG) is fusion peptide. The N-linked (GlcNAc...) asparagine; by host glycan is linked to Asn433. 2 disulfides stabilise this stretch: Cys465–Cys565 and Cys582–Cys613. The helical transmembrane segment at 726-746 (AAFSGVSWTMKILIGVIITWI) threads the bilayer. Over 747 to 752 (GMNSRS) the chain is Cytoplasmic. The helical transmembrane segment at 753 to 773 (TSLSVSLVLVGIVTLYLGVMV) threads the bilayer. Over 774–1195 (QADSGCVVSW…MVGATMTDDI (422 aa)) the chain is Extracellular. Intrachain disulfides connect Cys779-Cys790, Cys830-Cys918, Cys954-Cys998, Cys1055-Cys1104, Cys1066-Cys1088, and Cys1087-Cys1091. N-linked (GlcNAc...) asparagine; by host glycosylation is found at Asn905 and Asn982. Asn1134 carries N-linked (GlcNAc...) asparagine; by host glycosylation. The helical transmembrane segment at 1196 to 1220 (GMGVTYLALLAAFKVRPTFAAGLLL) threads the bilayer. Over 1221 to 1226 (RKLTSK) the chain is Cytoplasmic. Residues 1227-1245 (ELMMTTIGIVLLSQSTIPE) form a helical membrane-spanning segment. At 1246–1269 (TILELTDALALGMMVLKMVRNMEK) the chain is on the lumenal side. Residues 1270-1290 (YQLAVTIMAILCVPNAVILQN) traverse the membrane as a helical segment. Residue Ala1291 is a topological domain, cytoplasmic. The helical transmembrane segment at 1292 to 1310 (WKVSCTILAVVSVSPLLLT) threads the bilayer. The Lumenal segment spans residues 1311–1317 (SSQQKTD). A helical transmembrane segment spans residues 1318–1338 (WIPLALTIKGLNPTAIFLTTL). At 1339–1346 (SRTSKKRS) the chain is on the cytoplasmic side. A helical membrane pass occupies residues 1347 to 1367 (WPLNEAIMAVGMVSILASSLL). The Lumenal portion of the chain corresponds to 1368–1370 (KND). The helical transmembrane segment at 1371-1391 (IPMTGPLVAGGLLTVCYVLTG) threads the bilayer. The Cytoplasmic portion of the chain corresponds to 1392 to 1447 (RSADLELERAADVKWEDQAEISGSSPILSITISEDGSMSIKNEEEEQTLTILIRTG). The segment at 1398 to 1437 (LERAADVKWEDQAEISGSSPILSITISEDGSMSIKNEEEE) is interacts with and activates NS3 protease. Residues 1448-1468 (LLVISGLFPVSIPITAAAWYL) constitute an intramembrane region (helical). Residues 1469–2147 (WEVKKQRAGV…LSELPETLET (679 aa)) are Cytoplasmic-facing. A Peptidase S7 domain is found at 1476–1653 (AGVLWDVPSP…EKSIEDNPEI (178 aa)). Catalysis depends on charge relay system; for serine protease NS3 activity residues His1526, Asp1550, and Ser1610. Positions 1655-1811 (DDIFRKRRLT…QSNAPIIDEE (157 aa)) constitute a Helicase ATP-binding domain. The important for RNA-binding stretch occupies residues 1659–1662 (RKRR). An ATP-binding site is contributed by 1668–1675 (LHPGAGKT). The DEAH box signature appears at 1759 to 1762 (DEAH). A Helicase C-terminal domain is found at 1821-1988 (SGHEWVTDFK…IIPSMFEPER (168 aa)). Lys1863 carries the post-translational modification N6-acetyllysine; by host. Residues 2148 to 2168 (LLLLTLLATVTGGIFLFLMSG) traverse the membrane as a helical segment. Over 2169 to 2170 (RG) the chain is Lumenal. Positions 2171–2191 (IGKMTLGMCCIITASVLLWYA) form an intramembrane region, helical. Residue Gln2192 is a topological domain, lumenal. The helical transmembrane segment at 2193-2213 (IQPHWIAASIILEFFLIVLLI) threads the bilayer. Over 2214 to 2228 (PEPEKQRTPQDNQLT) the chain is Cytoplasmic. Residues 2229–2249 (YVVIAILTVVAATMANEMGFL) form a helical membrane-spanning segment. The Lumenal portion of the chain corresponds to 2250-2274 (EKTKKDLGLGSIATQQPESNILDID). The helical intramembrane region spans 2275–2295 (LRPASAWTLYAVATTFVTPML). Residues 2296–2316 (RHSIENSSVNVSLTAIANQAT) are Lumenal-facing. Residues Asn2301 and Asn2305 are each glycosylated (N-linked (GlcNAc...) asparagine; by host). An intramembrane region (helical) is located at residues 2317 to 2337 (VLMGLGKGWPLSKMDIGVPLL). Residues 2338–2347 (AIGCYSQVNP) lie on the Lumenal side of the membrane. Residues 2348–2368 (ITLTAALLLLVAHYAIIGPGL) form a helical membrane-spanning segment. Residues 2369 to 2413 (QAKATREAQKRAAAGIMKNPTVDGITVIDLDPIPYDPKFEKQLGQ) are Cytoplasmic-facing. Residues 2414-2434 (VMLLVLCVTQVLMMRTTWALC) traverse the membrane as a helical segment. Over 2435–2459 (EALTLATGPISTLWEGNPGRFWNTT) the chain is Lumenal. An N-linked (GlcNAc...) asparagine; by host glycan is attached at Asn2457. The chain crosses the membrane as a helical span at residues 2460–2480 (IAVSMANIFRGSYLAGAGLLF). Topologically, residues 2481-3391 (SIMKNTTNTR…REEEEAGVLW (911 aa)) are cytoplasmic. An mRNA cap 0-1 NS5-type MT domain is found at 2493–2755 (TGNIGETLGE…DVDLGSGTRN (263 aa)). Ser2547 provides a ligand contact to S-adenosyl-L-methionine. Ser2547 bears the Phosphoserine mark. Catalysis depends on Lys2552, which acts as the For 2'-O-MTase activity. The short motif at 2568–2571 (VVDL) is the SUMO-interacting motif element. Gly2577, Trp2578, Thr2595, Lys2596, Asp2622, and Val2623 together coordinate S-adenosyl-L-methionine. Asp2637 acts as the For 2'-O-MTase activity in catalysis. Ile2638 contacts S-adenosyl-L-methionine. Active-site for 2'-O-MTase activity residues include Lys2672 and Glu2708. S-adenosyl-L-methionine is bound at residue Tyr2710. Zn(2+) contacts are provided by Glu2929, His2933, Cys2938, and Cys2941. One can recognise a RdRp catalytic domain in the interval 3020–3169 (AMYADDTAGW…PLDDRFASAL (150 aa)). Zn(2+) is bound by residues His3203, Cys3219, and Cys3338.

This sequence in the N-terminal section; belongs to the class I-like SAM-binding methyltransferase superfamily. mRNA cap 0-1 NS5-type methyltransferase family. In terms of assembly, homodimer. Interacts (via N-terminus) with host EXOC1 (via C-terminus); this interaction results in EXOC1 degradation through the proteasome degradation pathway. As to quaternary structure, forms heterodimers with envelope protein E in the endoplasmic reticulum and Golgi. Homodimer; in the endoplasmic reticulum and Golgi. Interacts with protein prM. Interacts with non-structural protein 1. In terms of assembly, homodimer; Homohexamer when secreted. Interacts with envelope protein E. Interacts with host PRKAA1. As to quaternary structure, interacts (via N-terminus) with serine protease NS3. Forms a heterodimer with serine protease NS3. May form homooligomers. In terms of assembly, forms a heterodimer with NS2B. Interacts with NS4B. Interacts with unphosphorylated RNA-directed RNA polymerase NS5; this interaction stimulates RNA-directed RNA polymerase NS5 guanylyltransferase activity. Interacts with host SHFL. As to quaternary structure, interacts with host MAVS; this interaction inhibits the synthesis of IFN-beta. Interacts with host SHFL. Interacts with host AUP1; the interaction occurs in the presence of Dengue virus NS4B and induces lipophagy which facilitates production of virus progeny particles. May interact with host SRPRA and SEC61G. Interacts with serine protease NS3. In terms of assembly, homodimer. Interacts with host STAT2; this interaction inhibits the phosphorylation of the latter, and, when all viral proteins are present (polyprotein), targets STAT2 for degradation. Interacts with serine protease NS3. Interacts with host PAF1 complex; the interaction may prevent the recruitment of the PAF1 complex to interferon-responsive genes, and thus reduces the immune response. Specific enzymatic cleavages in vivo yield mature proteins. Cleavages in the lumen of endoplasmic reticulum are performed by host signal peptidase, whereas cleavages in the cytoplasmic side are performed by serine protease NS3. Signal cleavage at the 2K-4B site requires a prior NS3 protease-mediated cleavage at the 4A-2K site. Post-translationally, cleaved in post-Golgi vesicles by a host furin, releasing the mature small envelope protein M, and peptide pr. This cleavage is incomplete as up to 30% of viral particles still carry uncleaved prM. In terms of processing, N-glycosylated. N-glycosylated. The excreted form is glycosylated and this is required for efficient secretion of the protein from infected cells. Post-translationally, acetylated by host KAT5. Acetylation modulates NS3 RNA-binding and unwinding activities and plays an important positive role for viral replication. In terms of processing, phosphorylated on serines residues. This phosphorylation may trigger NS5 nuclear localization. Sumoylation of RNA-directed RNA polymerase NS5 increases NS5 protein stability allowing proper viral RNA replication.

Its subcellular location is the virion. It is found in the host nucleus. The protein resides in the host cytoplasm. It localises to the host perinuclear region. The protein localises to the secreted. Its subcellular location is the virion membrane. It is found in the host endoplasmic reticulum membrane. The protein resides in the host mitochondrion. It carries out the reaction Selective hydrolysis of -Xaa-Xaa-|-Yaa- bonds in which each of the Xaa can be either Arg or Lys and Yaa can be either Ser or Ala.. The enzyme catalyses RNA(n) + a ribonucleoside 5'-triphosphate = RNA(n+1) + diphosphate. The catalysed reaction is a ribonucleoside 5'-triphosphate + H2O = a ribonucleoside 5'-diphosphate + phosphate + H(+). It catalyses the reaction ATP + H2O = ADP + phosphate + H(+). It carries out the reaction a 5'-end (5'-triphosphoguanosine)-ribonucleoside in mRNA + S-adenosyl-L-methionine = a 5'-end (N(7)-methyl 5'-triphosphoguanosine)-ribonucleoside in mRNA + S-adenosyl-L-homocysteine. The enzyme catalyses a 5'-end (N(7)-methyl 5'-triphosphoguanosine)-ribonucleoside in mRNA + S-adenosyl-L-methionine = a 5'-end (N(7)-methyl 5'-triphosphoguanosine)-(2'-O-methyl-ribonucleoside) in mRNA + S-adenosyl-L-homocysteine + H(+). Its function is as follows. Plays a role in virus budding by binding to the cell membrane and gathering the viral RNA into a nucleocapsid that forms the core of a mature virus particle. During virus entry, may induce genome penetration into the host cytoplasm after hemifusion induced by the surface proteins. Can migrate to the cell nucleus where it modulates host functions. Overcomes the anti-viral effects of host EXOC1 by sequestering and degrading the latter through the proteasome degradation pathway. Inhibits RNA silencing by interfering with host Dicer. In terms of biological role, prevents premature fusion activity of envelope proteins in trans-Golgi by binding to envelope protein E at pH6.0. After virion release in extracellular space, gets dissociated from E dimers. Functionally, acts as a chaperone for envelope protein E during intracellular virion assembly by masking and inactivating envelope protein E fusion peptide. prM is the only viral peptide matured by host furin in the trans-Golgi network probably to avoid catastrophic activation of the viral fusion activity in acidic Golgi compartment prior to virion release. prM-E cleavage is inefficient, and many virions are only partially matured. These uncleaved prM would play a role in immune evasion. Its function is as follows. May play a role in virus budding. Exerts cytotoxic effects by activating a mitochondrial apoptotic pathway through M ectodomain. May display a viroporin activity. Binds to host cell surface receptor and mediates fusion between viral and cellular membranes. Envelope protein is synthesized in the endoplasmic reticulum in the form of heterodimer with protein prM. They play a role in virion budding in the ER, and the newly formed immature particle is covered with 60 spikes composed of heterodimer between precursor prM and envelope protein E. The virion is transported to the Golgi apparatus where the low pH causes dissociation of PrM-E heterodimers and formation of E homodimers. prM-E cleavage is inefficient, and many virions are only partially matured. These uncleaved prM would play a role in immune evasion. In terms of biological role, involved in immune evasion, pathogenesis and viral replication. Once cleaved off the polyprotein, is targeted to three destinations: the viral replication cycle, the plasma membrane and the extracellular compartment. Essential for viral replication. Required for formation of the replication complex and recruitment of other non-structural proteins to the ER-derived membrane structures. Excreted as a hexameric lipoparticle that plays a role against host immune response. Antagonizing the complement function. Binds to the host macrophages and dendritic cells. Inhibits signal transduction originating from Toll-like receptor 3 (TLR3). Mediates complement activation, which may contribute to the pathogenesis of the vascular leakage that occurs in severe dengue disease. Activates autophagy through the AMPK/ERK/mTOR signaling pathway. Mechanistically, acts as the assembly platform for STK11-AMPK interactions and promotes STK11-AMPK interactions. In turn, promotes phosphorylation of the AMPK kinase structural domain and activates AMPK, thereby positively regulating the AMPK/ERK/mTOR signaling pathway and inducing autophagy. Functionally, disrupts the host endothelial glycocalyx layer of host pulmonary microvascular endothelial cells, inducing degradation of sialic acid and shedding of heparan sulfate proteoglycans. NS1 induces expression of sialidases, heparanase, and activates cathepsin L, which activates heparanase via enzymatic cleavage. These effects are probably linked to the endothelial hyperpermeability observed in severe dengue disease. Its function is as follows. Component of the viral RNA replication complex that functions in virion assembly and antagonizes the host immune response. Required cofactor for the serine protease function of NS3. May have membrane-destabilizing activity and form viroporins. In terms of biological role, displays three enzymatic activities: serine protease, NTPase and RNA helicase. NS3 serine protease, in association with NS2B, performs its autocleavage and cleaves the polyprotein at dibasic sites in the cytoplasm: C-prM, NS2A-NS2B, NS2B-NS3, NS3-NS4A, NS4A-2K and NS4B-NS5. NS3 RNA helicase binds RNA and unwinds dsRNA in the 3' to 5' direction. Functionally, regulates the ATPase activity of the NS3 helicase activity. NS4A allows NS3 helicase to conserve energy during unwinding. Plays a role in the inhibition of the host innate immune response. Interacts with host MAVS and thereby prevents the interaction between RIGI and MAVS. In turn, IFN-beta production is impaired. Interacts with host AUP1 which mediates induction of lipophagy in host cells and facilitates production of virus progeny particles. Its function is as follows. Functions as a signal peptide for NS4B and is required for the interferon antagonism activity of the latter. Induces the formation of ER-derived membrane vesicles where the viral replication takes place. Inhibits interferon (IFN)-induced host STAT1 phosphorylation and nuclear translocation, thereby preventing the establishment of cellular antiviral state by blocking the IFN-alpha/beta pathway. In terms of biological role, replicates the viral (+) and (-) RNA genome, and performs the capping of genomes in the cytoplasm. NS5 methylates viral RNA cap at guanine N-7 and ribose 2'-O positions. Besides its role in RNA genome replication, also prevents the establishment of cellular antiviral state by blocking the interferon-alpha/beta (IFN-alpha/beta) signaling pathway. Inhibits host TYK2 and STAT2 phosphorylation, thereby preventing activation of JAK-STAT signaling pathway. May reduce immune responses by preventing the recruitment of the host PAF1 complex to interferon-responsive genes. This is Genome polyprotein from Aedimorphus (Red guenon).